Here is a 325-residue protein sequence, read N- to C-terminus: DNA-directed RNA polymerase subunit alpha (325 aa).

Residues 1 to 231 are alpha N-terminal domain (alpha-NTD); the sequence is MQNSLLKPRI…DQLNVFAALE (231 aa). The interval 246–325 is alpha C-terminal domain (alpha-CTD); the sequence is VDPILLRPVD…ENWPPAGLEK (80 aa).

This sequence belongs to the RNA polymerase alpha chain family. As to quaternary structure, homodimer. The RNAP catalytic core consists of 2 alpha, 1 beta, 1 beta' and 1 omega subunit. When a sigma factor is associated with the core the holoenzyme is formed, which can initiate transcription.

The catalysed reaction is RNA(n) + a ribonucleoside 5'-triphosphate = RNA(n+1) + diphosphate. Its function is as follows. DNA-dependent RNA polymerase catalyzes the transcription of DNA into RNA using the four ribonucleoside triphosphates as substrates. The polypeptide is DNA-directed RNA polymerase subunit alpha (Janthinobacterium sp. (strain Marseille) (Minibacterium massiliensis)).